A 283-amino-acid chain; its full sequence is Bifunctional protein FolD (283 aa).

Residues 165-167 and serine 190 contribute to the NADP(+) site; that span reads GRS.

It belongs to the tetrahydrofolate dehydrogenase/cyclohydrolase family. As to quaternary structure, homodimer.

The catalysed reaction is (6R)-5,10-methylene-5,6,7,8-tetrahydrofolate + NADP(+) = (6R)-5,10-methenyltetrahydrofolate + NADPH. It carries out the reaction (6R)-5,10-methenyltetrahydrofolate + H2O = (6R)-10-formyltetrahydrofolate + H(+). It functions in the pathway one-carbon metabolism; tetrahydrofolate interconversion. Functionally, catalyzes the oxidation of 5,10-methylenetetrahydrofolate to 5,10-methenyltetrahydrofolate and then the hydrolysis of 5,10-methenyltetrahydrofolate to 10-formyltetrahydrofolate. This is Bifunctional protein FolD from Methylibium petroleiphilum (strain ATCC BAA-1232 / LMG 22953 / PM1).